Here is a 166-residue protein sequence, read N- to C-terminus: NAD(P)H-quinone oxidoreductase subunit I, chloroplastic (166 aa).

4Fe-4S ferredoxin-type domains follow at residues 55 to 84 (GRIHFEFDKCIACEVCVRVCPIDLPVVDWK) and 95 to 124 (LNYSIDFGICIFCGNCVEYCPTNCLSMTEE). 8 residues coordinate [4Fe-4S] cluster: Cys-64, Cys-67, Cys-70, Cys-74, Cys-104, Cys-107, Cys-110, and Cys-114.

The protein belongs to the complex I 23 kDa subunit family. NDH is composed of at least 16 different subunits, 5 of which are encoded in the nucleus. The cofactor is [4Fe-4S] cluster.

The protein resides in the plastid. The protein localises to the chloroplast thylakoid membrane. The enzyme catalyses a plastoquinone + NADH + (n+1) H(+)(in) = a plastoquinol + NAD(+) + n H(+)(out). The catalysed reaction is a plastoquinone + NADPH + (n+1) H(+)(in) = a plastoquinol + NADP(+) + n H(+)(out). NDH shuttles electrons from NAD(P)H:plastoquinone, via FMN and iron-sulfur (Fe-S) centers, to quinones in the photosynthetic chain and possibly in a chloroplast respiratory chain. The immediate electron acceptor for the enzyme in this species is believed to be plastoquinone. Couples the redox reaction to proton translocation, and thus conserves the redox energy in a proton gradient. In Calea megacephala, this protein is NAD(P)H-quinone oxidoreductase subunit I, chloroplastic.